We begin with the raw amino-acid sequence, 284 residues long: Protein phosphatase 1 regulatory subunit 3B (284 aa).

Positions 61–64 match the PP1-binding motif motif; that stretch reads RVSF. Residues 124–232 form the CBM21 domain; sequence RNRLQTDHVC…SNKGKNYRII (109 aa). A Phosphoserine modification is found at Ser-260.

In terms of assembly, interacts with glycogen, PPP1CC catalytic subunit of PP1 and PYGL. Associates with glycogen particles. Forms complexes with debranching enzyme, glycogen phosphorylase, glycogen synthase and phosphorylase kinase which is necessary for its regulation of PP1 activity.

Functionally, acts as a glycogen-targeting subunit for phosphatase PP1. Facilitates interaction of the PP1 with enzymes of the glycogen metabolism and regulates its activity. Suppresses the rate at which PP1 dephosphorylates (inactivates) glycogen phosphorylase and enhances the rate at which it activates glycogen synthase and therefore limits glycogen breakdown. Its activity is inhibited by PYGL, resulting in inhibition of the glycogen synthase and glycogen phosphorylase phosphatase activities of PP1. Dramatically increases basal and insulin-stimulated glycogen synthesis upon overexpression in hepatocytes. This is Protein phosphatase 1 regulatory subunit 3B (PPP1R3B) from Bos taurus (Bovine).